Consider the following 112-residue polypeptide: MTPLAERLKHLSSAEDFLQFFGVPFDQKVVDVCRLHILKRFFQYIRQQASIPQDTEAALFATYRDQLARAYRDFVASTPAEEKVFKVFQDVDGRQHVSVDTLRASLPARGTA.

The protein belongs to the NifW family. In terms of assembly, homotrimer; associates with NifD.

May protect the nitrogenase Fe-Mo protein from oxidative damage. This Burkholderia vietnamiensis (strain G4 / LMG 22486) (Burkholderia cepacia (strain R1808)) protein is Nitrogenase-stabilizing/protective protein NifW.